The sequence spans 505 residues: RNA-splicing ligase RtcB homolog (505 aa).

Mn(2+) is bound by residues D119, C122, H227, and H259. 226-230 (NHYAE) provides a ligand contact to GMP. S300 is subject to Phosphoserine. H353 contributes to the Mn(2+) binding site. GMP is bound by residues 353-354 (HN), 402-405 (GGTM), S409, and 428-431 (HGAG). H428 functions as the GMP-histidine intermediate in the catalytic mechanism. K496 is covalently cross-linked (Glycyl lysine isopeptide (Lys-Gly) (interchain with G-Cter in SUMO2)). Position 504 (K504) interacts with GMP.

This sequence belongs to the RtcB family. Catalytic component of the tRNA-splicing ligase complex. It depends on Mn(2+) as a cofactor.

It localises to the nucleus. It is found in the cytoplasm. It catalyses the reaction a 3'-end 3'-phospho-ribonucleotide-RNA + a 5'-end dephospho-ribonucleoside-RNA + GTP = a ribonucleotidyl-ribonucleotide-RNA + GMP + diphosphate. It carries out the reaction a 3'-end 2',3'-cyclophospho-ribonucleotide-RNA + a 5'-end dephospho-ribonucleoside-RNA + GTP + H2O = a ribonucleotidyl-ribonucleotide-RNA + GMP + diphosphate + H(+). Its function is as follows. Catalytic subunit of the tRNA-splicing ligase complex that acts by directly joining spliced tRNA halves to mature-sized tRNAs by incorporating the precursor-derived splice junction phosphate into the mature tRNA as a canonical 3',5'-phosphodiester. May act as an RNA ligase with broad substrate specificity, and may function toward other RNAs. In Sus scrofa (Pig), this protein is RNA-splicing ligase RtcB homolog.